The primary structure comprises 236 residues: 7-cyano-7-deazaguanine synthase (236 aa).

12 to 22 is a binding site for ATP; the sequence is FSGGQDSTTCL. Zn(2+)-binding residues include cysteine 200, cysteine 215, cysteine 218, and cysteine 221.

This sequence belongs to the QueC family. The cofactor is Zn(2+).

It catalyses the reaction 7-carboxy-7-deazaguanine + NH4(+) + ATP = 7-cyano-7-deazaguanine + ADP + phosphate + H2O + H(+). It functions in the pathway purine metabolism; 7-cyano-7-deazaguanine biosynthesis. Catalyzes the ATP-dependent conversion of 7-carboxy-7-deazaguanine (CDG) to 7-cyano-7-deazaguanine (preQ(0)). The polypeptide is 7-cyano-7-deazaguanine synthase (Bradyrhizobium sp. (strain ORS 278)).